The primary structure comprises 782 residues: Coiled-coil alpha-helical rod protein 1 (782 aa).

Basic and acidic residues-rich tracts occupy residues 62–74 and 208–218; these read ERDV…EPGR and ETRRAGEAKEL. Disordered stretches follow at residues 62 to 82 and 185 to 218; these read ERDV…WGLE and AHKE…AKEL. 3 coiled-coil regions span residues 82–314, 344–398, and 498–691; these read EGSQ…ELTR, LMVQ…EVER, and VTDV…QQEG.

It localises to the cytoplasm. The protein localises to the nucleus. May be a regulator of keratinocyte proliferation or differentiation. The chain is Coiled-coil alpha-helical rod protein 1 (CCHCR1) from Gorilla gorilla gorilla (Western lowland gorilla).